Reading from the N-terminus, the 424-residue chain is Putative chloroquine resistance transporter (424 aa).

At methionine 1 to asparagine 56 the chain is on the cytoplasmic side. A helical membrane pass occupies residues isoleucine 57–serine 77. Residues lysine 78–serine 88 lie on the Vacuolar side of the membrane. The N-linked (GlcNAc...) asparagine glycan is linked to asparagine 86. Residues phenylalanine 89–isoleucine 109 traverse the membrane as a helical segment. The Cytoplasmic portion of the chain corresponds to tyrosine 110–asparagine 125. A helical transmembrane segment spans residues phenylalanine 126–isoleucine 146. Residues glycine 147–glutamine 156 are Vacuolar-facing. Residues serine 157–tyrosine 177 traverse the membrane as a helical segment. At arginine 178 to histidine 180 the chain is on the cytoplasmic side. A helical membrane pass occupies residues leucine 181 to leucine 201. Over serine 202–asparagine 209 the chain is Vacuolar. The helical transmembrane segment at serine 210–threonine 230 threads the bilayer. At arginine 231–methionine 248 the chain is on the cytoplasmic side. A helical transmembrane segment spans residues valine 249–leucine 269. Topologically, residues lysine 270–lysine 317 are vacuolar. Disulfide bonds link cysteine 289/cysteine 312 and cysteine 301/cysteine 309. A helical transmembrane segment spans residues threonine 318–aspartate 338. Over lysine 339–threonine 346 the chain is Cytoplasmic. The chain crosses the membrane as a helical span at residues isoleucine 347–glycine 367. Residues aspartate 368–aspartate 377 are Vacuolar-facing. Residues phenylalanine 378 to leucine 398 form a helical membrane-spanning segment. The Cytoplasmic segment spans residues glutamate 399–alanine 424.

This sequence belongs to the CRT-like transporter family.

It localises to the vacuole membrane. In terms of biological role, nutrient transporter. Involved in maintaining the osmotic homeostasis of the digestive vacuole. In Plasmodium chabaudi, this protein is Putative chloroquine resistance transporter.